The sequence spans 656 residues: CXXC-type zinc finger protein 1 (656 aa).

M1 is modified (N-acetylmethionine). A compositionally biased stretch (acidic residues) spans 1–14; it reads MEGDGSDPEPPDAG. The tract at residues 1–20 is disordered; it reads MEGDGSDPEPPDAGEDSKSE. 2 positions are modified to phosphoserine: S6 and S19. Residues 28–76 form a PHD-type zinc finger; the sequence is YCICRKPDINCFMIGCDNCNEWFHGDCIRITEKMAKAIREWYCRECREK. Residues 84–162 form a disordered region; it reads YRHKKSRERD…QHHQQQQQQI (79 aa). Residues 90 to 120 are compositionally biased toward basic and acidic residues; that stretch reads RERDGNERDSSEPRDEGGGRKRPVPDPDLQR. S124 is modified (phosphoserine). The CXXC-type zinc-finger motif lies at 160–209; that stretch reads QQIKRSARMCGECEACRRTEDCGHCDFCRDMKKFGGPNKIRQKCRLRQCQ. Zn(2+) contacts are provided by C169, C172, C175, C181, C184, C187, C203, and C208. Disordered regions lie at residues 219–287 and 311–373; these read FPSS…LPLD and EESP…ASLP. Residue S224 is modified to Phosphoserine. The residue at position 227 (T227) is a Phosphothreonine. Positions 239 to 249 are enriched in low complexity; sequence LPTQQQPQPSQ. A Glycyl lysine isopeptide (Lys-Gly) (interchain with G-Cter in SUMO2) cross-link involves residue K250. Residues 321-334 are compositionally biased toward basic residues; that stretch reads RKRAVKVKHVKRRE. Positions 335–345 are enriched in basic and acidic residues; the sequence is KKSEKKKEERY. A compositionally biased stretch (basic residues) spans 346–358; that stretch reads KRHRQKQKHKDKW. Basic and acidic residues predominate over residues 359-368; it reads KHPERADAKD. Positions 422 to 474 form a coiled coil; the sequence is AEEHGKKLLERIRREQQSARTRLQEMERRFHELEAIILRAKQQAVREDEESNE.

Component of the SET1 complex, at least composed of the catalytic subunit (SETD1A or SETD1B), WDR5, WDR82, RBBP5, ASH2L/ASH2, CXXC1/CFP1 HCFC1 and DPY30. Interacts with SETD1A. Interacts with ZNF335. Interacts with PRDM9; this interaction does not link PRDM9-activated recombination hotspot sites with DSB machinery and is not required for the hotspot recognition pathway. Interacts with histone H3K4me3. May be regulated by proteolysis. Ubiquitous.

Its subcellular location is the nucleus speckle. It localises to the nucleus. Functionally, transcriptional activator that exhibits a unique DNA binding specificity for CpG unmethylated motifs with a preference for CpGG. The protein is CXXC-type zinc finger protein 1 (CXXC1) of Homo sapiens (Human).